Consider the following 117-residue polypeptide: Toxin CSTX-12 (117 aa).

Residues Met-1–Ala-20 form the signal peptide. The propeptide occupies Glu-21–Arg-47. Intrachain disulfides connect Cys-50–Cys-65, Cys-57–Cys-74, Cys-64–Cys-95, and Cys-76–Cys-93. A propeptide spanning residues Arg-82 to Arg-87 is cleaved from the precursor. At Ala-116 the chain carries Alanine amide.

Belongs to the neurotoxin 19 (CSTX) family. 12 subfamily. In terms of assembly, heterodimer of A and B chains; disulfide-linked. Interacts with CSTX-1 (AC P81694), and with CSTX-9 (AC P58604). As to expression, expressed by the venom gland.

It is found in the secreted. The protein resides in the target cell membrane. Functionally, synergistic toxin that induces or increases a cytolytic effect when combined with CSTX-1 (AC P81694) or CSTX-9 (AC P58604). When alone, has a weak insecticidal activity, with an unknown molecular target. This chain is Toxin CSTX-12, found in Cupiennius salei (American wandering spider).